We begin with the raw amino-acid sequence, 729 residues long: Neurochondrin (729 aa).

At Ser-2 the chain carries N-acetylserine. Phosphoserine is present on Ser-2. S-palmitoyl cysteine attachment occurs at residues Cys-3 and Cys-4. Arg-75 is modified (asymmetric dimethylarginine). Ser-448 is modified (phosphoserine).

It belongs to the neurochondrin family. As to quaternary structure, interacts with MCHR1. Interacts with SEMA4C. Interacts with DIAPH1 (via FH3 domain). Interacts with GRM5. Palmitoylated. Palmitoylation by ZDHHC1, ZDHHC3 and ZDHHC11 regulates the association of NCDN with endosome membranes. May also be palmitoylated by ZDHHC7. Expressed in the neuronal, chondral and bone tissues. Expressed in dendrites. Enriched in the brain in the surface layer I-IV. In brains, protein level increases in male but decreases in female with advancing age (at protein level). In adult brains, it is highly expressed in the forebrain and hindbrain. Highly expressed in the hippocampus, piriform cortex, septum, amygdaloid complex, medial geniculate nucleus, inferior colliculus, cerebellar nuclei and the nuclei of the Vth, VIIth, and XIIth cranial nerves. In bone tissues, it is expressed in osteoblasts and osteocytes.

It localises to the cytoplasm. The protein localises to the cytosol. Its subcellular location is the endosome membrane. It is found in the cell projection. The protein resides in the dendrite. It localises to the postsynapse. Functionally, probably involved in signal transduction, in the nervous system, via increasing cell surface localization of GRM5 and positively regulating its signaling. Required for the spatial learning process. Acts as a negative regulator of Ca(2+)-calmodulin-dependent protein kinase 2 (CaMK2) phosphorylation. May play a role in modulating melanin-concentrating hormone-mediated functions via its interaction with MCHR1 that interferes with G protein-coupled signal transduction. May be involved in bone metabolism. May also be involved in neurite outgrowth. In Mus musculus (Mouse), this protein is Neurochondrin (Ncdn).